We begin with the raw amino-acid sequence, 873 residues long: Alanine--tRNA ligase (873 aa).

Zn(2+) contacts are provided by H562, H566, C663, and H667.

It belongs to the class-II aminoacyl-tRNA synthetase family. Zn(2+) serves as cofactor.

It localises to the cytoplasm. The enzyme catalyses tRNA(Ala) + L-alanine + ATP = L-alanyl-tRNA(Ala) + AMP + diphosphate. Its function is as follows. Catalyzes the attachment of alanine to tRNA(Ala) in a two-step reaction: alanine is first activated by ATP to form Ala-AMP and then transferred to the acceptor end of tRNA(Ala). Also edits incorrectly charged Ser-tRNA(Ala) and Gly-tRNA(Ala) via its editing domain. This is Alanine--tRNA ligase from Bordetella petrii (strain ATCC BAA-461 / DSM 12804 / CCUG 43448).